A 491-amino-acid chain; its full sequence is NADH-ubiquinone oxidoreductase chain 2 (491 aa).

A run of 14 helical transmembrane segments spans residues 11–31, 38–58, 74–94, 106–126, 129–149, 161–181, 210–230, 238–258, 270–290, 298–318, 330–350, 375–395, 411–433, and 463–483; these read MIKYSIYILPLIILIVLSISI, VHIIIQSLKLTLIVIMIVIGI, ELIKLFEYLLLGVSYMIIKMF, ITDEGLILIYSSIIGMLISME, NLITLFLSLEISSICFYILAL, LKYYIIGGIATTILLLGIVSI, IALIVLGLILKLGIAPFHGWL, GMLMTFYLTITQKLVTLMVLI, AIMFTNGLIILILVTLVVGTI, LIRFIAYSAIVNSALLILMLA, VYYLINYIIGLTVLMSLIMGF, GAIVYILVLMYLAGLPPMTNF, VYLTMLAFFLSVGVMIYYMNLVK, and IVLGVMWLIFSQLYLDEILNV.

Belongs to the complex I subunit 2 family.

It localises to the mitochondrion inner membrane. It carries out the reaction a ubiquinone + NADH + 5 H(+)(in) = a ubiquinol + NAD(+) + 4 H(+)(out). Core subunit of the mitochondrial membrane respiratory chain NADH dehydrogenase (Complex I) that is believed to belong to the minimal assembly required for catalysis. Complex I functions in the transfer of electrons from NADH to the respiratory chain. The immediate electron acceptor for the enzyme is believed to be ubiquinone. This chain is NADH-ubiquinone oxidoreductase chain 2 (nad2), found in Dictyostelium citrinum (Slime mold).